The following is a 31-amino-acid chain: Potassium channel toxin alpha-KTx 5.4 (31 aa).

3 cysteine pairs are disulfide-bonded: Cys-3–Cys-21, Cys-8–Cys-26, and Cys-12–Cys-28. The interval 6–9 (RRCE) is [R/K]XCQ motif. Tyrosine amide is present on Tyr-31.

Belongs to the short scorpion toxin superfamily. Potassium channel inhibitor family. Alpha-KTx 05 subfamily. Expressed by the venom gland.

The protein localises to the secreted. In terms of biological role, blocks small conductance calcium-activated potassium channels. Shows activity on KCa2.2/KCNN2 (IC(50)=0.0243 nM), KCa2.3/KCNN3 (IC(50)=1.7 nM), and KCa2.1/KCNN1 (IC(50)=42 nM). Induces cell death when tested on human T lymphoblastic leukemia Jurkat E6.1 and human breast cancer MDA-MB-231 cell lines which constituvely express KCa2.2/KCNN2, but not on human peripheral blood lymphocytes (which do not express KCa2.2/KCNN2). This chain is Potassium channel toxin alpha-KTx 5.4, found in Hottentotta tamulus (Eastern Indian scorpion).